Here is a 330-residue protein sequence, read N- to C-terminus: Free fatty acid receptor 2 (330 aa).

The Extracellular segment spans residues 1 to 12 (MLPDWKSSLILM). A helical membrane pass occupies residues 13 to 33 (AYIIIFLTGLPANLLALRAFV). The Cytoplasmic portion of the chain corresponds to 34–41 (GRIRQPQP). A helical membrane pass occupies residues 42-62 (APVHILLLSLTLADLLLLLLL). Topologically, residues 63-84 (PFKIIEAASNFRWYLPKVVCAL) are extracellular. Residues 85-105 (TSFGFYSSIYCSTWLLAGISI) form a helical membrane-spanning segment. At 106-126 (ERYLGVAFPVQYKLSRRPLYG) the chain is on the cytoplasmic side. The helical transmembrane segment at 127–147 (VIAALVAWVMSFGHCTIVIIV) threads the bilayer. At 148–173 (QYLNTTEQVRSGNEITCYENFTDNQL) the chain is on the extracellular side. N-linked (GlcNAc...) asparagine glycosylation is found at Asn151 and Asn167. The helical transmembrane segment at 174–194 (DVVLPVRLELCLVLFFIPMAV) threads the bilayer. At 195 to 219 (TIFCYWRFVWIMLSQPLVGAQRRRR) the chain is on the cytoplasmic side. The chain crosses the membrane as a helical span at residues 220–240 (AVGLAVVTLLNFLVCFGPYNV). Residues 241-255 (SHLVGYHQRKSPWWR) lie on the Extracellular side of the membrane. Residues 256-276 (SIAVVFSSLNASLDPLLFYFS) traverse the membrane as a helical segment. The Cytoplasmic portion of the chain corresponds to 277–330 (SSVVRRAFGRGLQVLRNQGSSLLGRRGKDTAEGTNEDRGVGQGEGMPSSDFTTE). The tract at residues 299-330 (LGRRGKDTAEGTNEDRGVGQGEGMPSSDFTTE) is disordered. The segment covering 302 to 315 (RGKDTAEGTNEDRG) has biased composition (basic and acidic residues).

The protein belongs to the G-protein coupled receptor 1 family. In terms of assembly, interacts with FCN1 (via Fibrinogen C-terminal domain). In terms of tissue distribution, expressed at relatively high levels in peripheral blood leukocytes and, to lesser extent, in spleen.

It is found in the cell membrane. G protein-coupled receptor that is activated by a major product of dietary fiber digestion, the short chain fatty acids (SCFAs), and that plays a role in the regulation of whole-body energy homeostasis and in intestinal immunity. In omnivorous mammals, the short chain fatty acids acetate, propionate and butyrate are produced primarily by the gut microbiome that metabolizes dietary fibers. SCFAs serve as a source of energy but also act as signaling molecules. That G protein-coupled receptor is probably coupled to the pertussis toxin-sensitive, G(i/o)-alpha family of G proteins but also to the Gq family. Its activation results in the formation of inositol 1,4,5-trisphosphate, the mobilization of intracellular calcium, the phosphorylation of the MAPK3/ERK1 and MAPK1/ERK2 kinases and the inhibition of intracellular cAMP accumulation. May play a role in glucose homeostasis by regulating the secretion of GLP-1, in response to short-chain fatty acids accumulating in the intestine. May also regulate the production of LEP/Leptin, a hormone acting on the central nervous system to inhibit food intake. Finally, may also regulate whole-body energy homeostasis through adipogenesis regulating both differentiation and lipid storage of adipocytes. In parallel to its role in energy homeostasis, may also mediate the activation of the inflammatory and immune responses by SCFA in the intestine, regulating the rapid production of chemokines and cytokines. May also play a role in the resolution of the inflammatory response and control chemotaxis in neutrophils. In addition to SCFAs, may also be activated by the extracellular lectin FCN1 in a process leading to activation of monocytes and inducing the secretion of interleukin-8/IL-8 in response to the presence of microbes. Among SCFAs, the fatty acids containing less than 6 carbons, the most potent activators are probably acetate, propionate and butyrate. Exhibits a SCFA-independent constitutive G protein-coupled receptor activity. The protein is Free fatty acid receptor 2 (FFAR2) of Homo sapiens (Human).